We begin with the raw amino-acid sequence, 404 residues long: Probable pectate lyase 18 (404 aa).

The first 20 residues, 1 to 20, serve as a signal peptide directing secretion; the sequence is MSTLFFTFSLLLLAPLLVIS. Asn-37 is a glycosylation site (N-linked (GlcNAc...) asparagine). A disulfide bridge links Cys-159 with Cys-178. The N-linked (GlcNAc...) asparagine glycan is linked to Asn-191. Asp-200, Asp-202, Asp-224, and Asp-228 together coordinate Ca(2+). Residue Arg-280 is part of the active site.

Belongs to the polysaccharide lyase 1 family. It depends on Ca(2+) as a cofactor. In terms of tissue distribution, predominantly found in the pistil where it is found in the outer five layers of the strands of transmitting tissue within the upper two-thirds of the style. Found at much lower levels in the anthers and vegetative organs.

It localises to the secreted. The catalysed reaction is Eliminative cleavage of (1-&gt;4)-alpha-D-galacturonan to give oligosaccharides with 4-deoxy-alpha-D-galact-4-enuronosyl groups at their non-reducing ends.. Its pathway is glycan metabolism; pectin degradation; 2-dehydro-3-deoxy-D-gluconate from pectin: step 2/5. Its function is as follows. May have a role in the development of the transmitting tissue of the style and/or in the events related to pollination such as some aspect in the facilitation of compatible pollen tube growth. This is Probable pectate lyase 18 from Solanum lycopersicum (Tomato).